A 155-amino-acid chain; its full sequence is Aspartate carbamoyltransferase regulatory chain (155 aa).

C113, C118, C141, and C144 together coordinate Zn(2+).

This sequence belongs to the PyrI family. Contains catalytic and regulatory chains. Zn(2+) serves as cofactor.

Its function is as follows. Involved in allosteric regulation of aspartate carbamoyltransferase. In Methanococcus aeolicus (strain ATCC BAA-1280 / DSM 17508 / OCM 812 / Nankai-3), this protein is Aspartate carbamoyltransferase regulatory chain.